Here is a 503-residue protein sequence, read N- to C-terminus: Putative ribose/galactose/methyl galactoside import ATP-binding protein (503 aa).

ABC transporter domains are found at residues 7–244 and 254–498; these read LEMI…VGRE and VPIG…TGQL. 39–46 contacts ATP; that stretch reads GENGAGKS.

This sequence belongs to the ABC transporter superfamily. Carbohydrate importer 2 (CUT2) (TC 3.A.1.2) family.

It localises to the cell membrane. The enzyme catalyses D-ribose(out) + ATP + H2O = D-ribose(in) + ADP + phosphate + H(+). It carries out the reaction D-galactose(out) + ATP + H2O = D-galactose(in) + ADP + phosphate + H(+). Functionally, part of an ABC transporter complex involved in carbohydrate import. Could be involved in ribose, galactose and/or methyl galactoside import. Responsible for energy coupling to the transport system. The sequence is that of Putative ribose/galactose/methyl galactoside import ATP-binding protein from Geobacillus kaustophilus (strain HTA426).